The primary structure comprises 247 residues: MAETAEKVILLTGSSKGIGLATAEALQKKAKVIAVSRSLTPELETLLIQNPDSFVHVKGDVTEVGKASIETAIKKFGKLDSVILNAGVLEPIAKIADADINEWRKLFDINFFSVVETVKYAIPHLRKTKGTIVIVSSGAAVRVFPAWAAYCCSKAAINMLVMNLGSEEPDIMSVAVRPGVVDTPMQVSIRNDSNKEAMGGDTHNFFKELKTSGQLVAPQDIAKALSFLALNNNPKLTGQFVEWKSFV.

NADP(+)-binding residues include L11, N85, and K119. The active-site Proton donor is S136. Residues Y150, K154, V181, and T183 each contribute to the NADP(+) site. The active-site Proton acceptor is Y150. The active-site Lowers pKa of active site Tyr is the K154.

It belongs to the short-chain dehydrogenases/reductases (SDR) family.

This is an uncharacterized protein from Schizosaccharomyces pombe (strain 972 / ATCC 24843) (Fission yeast).